Here is a 227-residue protein sequence, read N- to C-terminus: Glutathione S-transferase U17 (227 aa).

The GST N-terminal domain maps to 4 to 83 (SDVKLIGAWA…YIDDTWSSSG (80 aa)). Glutathione contacts are provided by residues 14–15 (SP), 40–41 (SK), 54–55 (KI), and 67–68 (ES). Positions 90–222 (DPYDRAMARF…KLAEFAKKIF (133 aa)) constitute a GST C-terminal domain.

This sequence belongs to the GST superfamily. Tau family.

Its subcellular location is the cytoplasm. The protein resides in the cytosol. The enzyme catalyses RX + glutathione = an S-substituted glutathione + a halide anion + H(+). Functionally, involved in light signaling, mainly phyA-mediated photomorphogenesis and in the integration of various phytohormone signals to modulate various aspects of plant development by affecting glutathione pools. In vitro, possesses glutathione S-transferase activity toward 1-chloro-2,4-dinitrobenzene (CDNB) and benzyl isothiocyanate (BITC). In Arabidopsis thaliana (Mouse-ear cress), this protein is Glutathione S-transferase U17 (GSTU17).